Reading from the N-terminus, the 131-residue chain is MMTDIIADSLTRIRNAAQRRLDVTTLLHSNTIEATVAIFVDKGYLESYKVKEDGNKKTIKVVLKYDDNEKSVINEIKKISKPGRRVHQGKDEIRTFKNGYGTLVVSTSQGVLANDEAYKRGIGGEVICSIW.

The protein belongs to the universal ribosomal protein uS8 family. As to quaternary structure, part of the 30S ribosomal subunit. Contacts proteins S5 and S12.

Functionally, one of the primary rRNA binding proteins, it binds directly to 16S rRNA central domain where it helps coordinate assembly of the platform of the 30S subunit. This is Small ribosomal subunit protein uS8 from Sulfurovum sp. (strain NBC37-1).